Here is a 152-residue protein sequence, read N- to C-terminus: Succinate dehydrogenase [ubiquinone] cytochrome b small subunit B, mitochondrial (152 aa).

A mitochondrion-targeting transit peptide spans 1–21; that stretch reads MATLLRVSSLCRANRASAFKS. The Mitochondrial matrix portion of the chain corresponds to 22–56; it reads LLIRPLPCLSQDLHMVQTSQIHTSPNHHAGSKAAS. A helical transmembrane segment spans residues 57-78; the sequence is MHWTGERALSVALLGLLPAAYL. Residues 79–83 lie on the Mitochondrial intermembrane side of the membrane; that stretch reads YPGAA. The chain crosses the membrane as a helical span at residues 84-104; that stretch reads MDYSLAAALTLHGHWGLGQVV. Histidine 95 lines the heme b pocket. Residues 105-113 are Mitochondrial matrix-facing; that stretch reads TDYVHGETK. Tyrosine 107 serves as a coordination point for a ubiquinone. A helical transmembrane segment spans residues 114–135; the sequence is IKMANTSLFALSALTFAGLCYF. The Mitochondrial intermembrane segment spans residues 136-152; sequence NYHDVGICKAVAMLWSL.

It belongs to the CybS family. Component of complex II composed of four subunits: the flavoprotein (FP) SDHA, iron-sulfur protein (IP) SDHB, and a cytochrome b560 composed of SDHC and SDHD.

The protein localises to the mitochondrion inner membrane. It functions in the pathway carbohydrate metabolism; tricarboxylic acid cycle. In terms of biological role, membrane-anchoring subunit of succinate dehydrogenase (SDH) that is involved in complex II of the mitochondrial electron transport chain and is responsible for transferring electrons from succinate to ubiquinone (coenzyme Q). SDH also oxidizes malate to the non-canonical enol form of oxaloacetate, enol-oxaloacetate. Enol-oxaloacetate, which is a potent inhibitor of the succinate dehydrogenase activity, is further isomerized into keto-oxaloacetate. The polypeptide is Succinate dehydrogenase [ubiquinone] cytochrome b small subunit B, mitochondrial (sdhd-b) (Xenopus laevis (African clawed frog)).